A 355-amino-acid chain; its full sequence is Probable dual-specificity RNA methyltransferase RlmN 1 (355 aa).

Glutamate 91 (proton acceptor) is an active-site residue. The 238-residue stretch at 99-336 (RADRAAGCLS…THLRRSRGPD (238 aa)) folds into the Radical SAM core domain. Cysteine 106 and cysteine 341 are joined by a disulfide. The [4Fe-4S] cluster site is built by cysteine 113, cysteine 117, and cysteine 120. S-adenosyl-L-methionine-binding positions include 163 to 164 (GE), serine 195, 218 to 220 (SLH), and asparagine 294. Cysteine 341 acts as the S-methylcysteine intermediate in catalysis.

Belongs to the radical SAM superfamily. RlmN family. [4Fe-4S] cluster is required as a cofactor.

The protein resides in the cytoplasm. It carries out the reaction adenosine(2503) in 23S rRNA + 2 reduced [2Fe-2S]-[ferredoxin] + 2 S-adenosyl-L-methionine = 2-methyladenosine(2503) in 23S rRNA + 5'-deoxyadenosine + L-methionine + 2 oxidized [2Fe-2S]-[ferredoxin] + S-adenosyl-L-homocysteine. The enzyme catalyses adenosine(37) in tRNA + 2 reduced [2Fe-2S]-[ferredoxin] + 2 S-adenosyl-L-methionine = 2-methyladenosine(37) in tRNA + 5'-deoxyadenosine + L-methionine + 2 oxidized [2Fe-2S]-[ferredoxin] + S-adenosyl-L-homocysteine. Functionally, specifically methylates position 2 of adenine 2503 in 23S rRNA and position 2 of adenine 37 in tRNAs. The chain is Probable dual-specificity RNA methyltransferase RlmN 1 from Opitutus terrae (strain DSM 11246 / JCM 15787 / PB90-1).